The chain runs to 137 residues: Large ribosomal subunit protein bL21 (137 aa).

The segment at 1 to 26 is disordered; the sequence is MADTKTATPATDAEEATATPPAAAPS.

Belongs to the bacterial ribosomal protein bL21 family. In terms of assembly, part of the 50S ribosomal subunit. Contacts protein L20.

In terms of biological role, this protein binds to 23S rRNA in the presence of protein L20. The sequence is that of Large ribosomal subunit protein bL21 from Parasynechococcus marenigrum (strain WH8102).